Here is a 204-residue protein sequence, read N- to C-terminus: Peptidyl-tRNA hydrolase (204 aa).

Tyr14 is a tRNA binding site. The Proton acceptor role is filled by His19. Residues Tyr64, Asn66, and Asn112 each contribute to the tRNA site.

The protein belongs to the PTH family. Monomer.

It localises to the cytoplasm. The enzyme catalyses an N-acyl-L-alpha-aminoacyl-tRNA + H2O = an N-acyl-L-amino acid + a tRNA + H(+). Functionally, hydrolyzes ribosome-free peptidyl-tRNAs (with 1 or more amino acids incorporated), which drop off the ribosome during protein synthesis, or as a result of ribosome stalling. In terms of biological role, catalyzes the release of premature peptidyl moieties from peptidyl-tRNA molecules trapped in stalled 50S ribosomal subunits, and thus maintains levels of free tRNAs and 50S ribosomes. The chain is Peptidyl-tRNA hydrolase from Nitrobacter hamburgensis (strain DSM 10229 / NCIMB 13809 / X14).